A 260-amino-acid polypeptide reads, in one-letter code: Kallikrein-8 (260 aa).

Positions 1–28 are cleaved as a signal peptide; that stretch reads MGRPPPCAIQTWILLFLLMGAWAGLTRA. Positions 29-32 are excised as a propeptide; sequence QGSK. The Peptidase S1 domain occupies 33–257; it reads ILEGQECKPH…YTNWIKKTMG (225 aa). 6 disulfide bridges follow: Cys39–Cys173, Cys58–Cys74, Cys145–Cys246, Cys152–Cys218, Cys184–Cys198, and Cys208–Cys233. The active-site Charge relay system is His73. A glycan (N-linked (GlcNAc...) asparagine) is linked at Asn110. Residue Asp120 is the Charge relay system of the active site. Ser212 serves as the catalytic Charge relay system.

Belongs to the peptidase S1 family. Kallikrein subfamily. As to quaternary structure, interacts with SPINK9. As to expression, restricted to hippocampus.

The protein localises to the secreted. It localises to the cytoplasm. The catalysed reaction is Cleavage of amide substrates following the basic amino acids Arg or Lys at the P1 position, with a preference for Arg over Lys.. Its function is as follows. Serine protease which is capable of degrading a number of proteins such as casein, fibrinogen, kininogen, fibronectin and collagen type IV. Also cleaves L1CAM in response to increased neural activity. Induces neurite outgrowth and fasciculation of cultured hippocampal neurons. Plays a role in the formation and maturation of orphan and small synaptic boutons in the Schaffer-collateral pathway, regulates Schaffer-collateral long-term potentiation in the hippocampus and is required for memory acquisition and synaptic plasticity. Involved in skin desquamation and keratinocyte proliferation. Plays a role in the secondary phase of pathogenesis following spinal cord injury. The chain is Kallikrein-8 (Klk8) from Rattus norvegicus (Rat).